We begin with the raw amino-acid sequence, 401 residues long: Cytochrome P450 BJ-1 (401 aa).

Cysteine 350 contacts heme.

Belongs to the cytochrome P450 family. It depends on heme as a cofactor.

Its function is as follows. Cytochromes P450 are a group of heme-thiolate monooxygenases. They oxidize a variety of structurally unrelated compounds, including steroids, fatty acids, and xenobiotics. This chain is Cytochrome P450 BJ-1 (cyp112), found in Bradyrhizobium diazoefficiens (strain JCM 10833 / BCRC 13528 / IAM 13628 / NBRC 14792 / USDA 110).